Here is a 562-residue protein sequence, read N- to C-terminus: MRLRLRLLALLLLLLAPPARAPKPSAQDVSLGVDWLTRYGYLPPPHPAQAQLQSPEKLRDAIKVMQRFAGLPETGRMDPGTVATMRKPRCSLPDVLGVAGLVRRRRRYALSGSVWKKRTLTWRVRSFPQSSQLSQETVRVLMSYALMAWGMESGLTFHEVDSPQGQEPDILIDFARAFHQDSYPFDGLGGTLAHAFFPGEHPISGDTHFDDEETWTFGSKDGEGTDLFAVAVHEFGHALGLGHSSAPNSIMRPFYQGPVGDPDKYRLSQDDRDGLQQLYGKAPQTPYDKPTRKPLAPPPQPPASPTHSPSFPIPDRCEGNFDAIANIRGETFFFKGPWFWRLQPSGQLVSPRPARLHRFWEGLPAQVRVVQAAYARHRDGRILLFSGPQFWVFQDRQLEGGARPLTELGLPPGEEVDAVFSWPQNGKTYLVRGRQYWRYDEAAARPDPGYPRDLSLWEGAPPSPDDVTVSNAGDTYFFKGAHYWRFPKNSIKTEPDAPQPMGPNWLDCPAPSSGPRAPRPPKATPVSETCDCQCELNQAAGRWPAPIPLLLLPLLVGGVASR.

Positions 1–21 (MRLRLRLLALLLLLLAPPARA) are cleaved as a signal peptide. Residues 22–107 (PKPSAQDVSL…VAGLVRRRRR (86 aa)) constitute a propeptide that is removed on maturation. A Cysteine switch motif is present at residues 88–95 (PRCSLPDV). 2 residues coordinate Zn(2+): Cys90 and His233. Glu234 is a catalytic residue. His237 and His243 together coordinate Zn(2+). Residues 278-313 (LYGKAPQTPYDKPTRKPLAPPPQPPASPTHSPSFPI) are disordered. Residues 295-304 (LAPPPQPPAS) show a composition bias toward pro residues. Hemopexin repeat units lie at residues 314–363 (PDRC…WEGL), 367–412 (VRVV…GLPP), 413–461 (GEEV…EGAP), and 462–508 (PSPD…WLDC). Cys317 and Cys508 are joined by a disulfide. A disordered region spans residues 490–526 (SIKTEPDAPQPMGPNWLDCPAPSSGPRAPRPPKATPV). Ala539 is lipidated: GPI-anchor amidated alanine. A propeptide spans 540-562 (AGRWPAPIPLLLLPLLVGGVASR) (removed in mature form).

This sequence belongs to the peptidase M10A family. The cofactor is Zn(2+). Ca(2+) is required as a cofactor. The precursor is cleaved by a furin endopeptidase. In terms of tissue distribution, expressed predominantly in leukocytes, lung and spleen. Expressed also in colon carcinoma, astrocytoma and glioblastomas.

The protein resides in the cell membrane. It localises to the secreted. Its subcellular location is the extracellular space. The protein localises to the extracellular matrix. Its function is as follows. May activate progelatinase A. This chain is Matrix metalloproteinase-25 (MMP25), found in Homo sapiens (Human).